The primary structure comprises 256 residues: Pimeloyl-[acyl-carrier protein] methyl ester esterase (256 aa).

Positions 15-242 (HLVLLHGWGL…AAHAPFISHP (228 aa)) constitute an AB hydrolase-1 domain. Substrate is bound by residues Trp22, 82 to 83 (SL), and 143 to 147 (FLALQ). Residue Ser82 is the Nucleophile of the active site. Residues Asp207 and His235 contribute to the active site. Residue His235 coordinates substrate.

It belongs to the AB hydrolase superfamily. Carboxylesterase BioH family. Monomer.

The protein localises to the cytoplasm. The catalysed reaction is 6-carboxyhexanoyl-[ACP] methyl ester + H2O = 6-carboxyhexanoyl-[ACP] + methanol + H(+). The protein operates within cofactor biosynthesis; biotin biosynthesis. In terms of biological role, the physiological role of BioH is to remove the methyl group introduced by BioC when the pimeloyl moiety is complete. It allows to synthesize pimeloyl-ACP via the fatty acid synthetic pathway through the hydrolysis of the ester bonds of pimeloyl-ACP esters. The polypeptide is Pimeloyl-[acyl-carrier protein] methyl ester esterase (Escherichia coli (strain SMS-3-5 / SECEC)).